Here is a 197-residue protein sequence, read N- to C-terminus: Ribonuclease HII (197 aa).

Positions 4–197 (IWVCGVDEAG…VRKALESVAS (194 aa)) constitute an RNase H type-2 domain. A divalent metal cation contacts are provided by Asp10, Glu11, and Asp106.

Belongs to the RNase HII family. Mn(2+) is required as a cofactor. Requires Mg(2+) as cofactor.

It localises to the cytoplasm. The catalysed reaction is Endonucleolytic cleavage to 5'-phosphomonoester.. Functionally, endonuclease that specifically degrades the RNA of RNA-DNA hybrids. This Polynucleobacter necessarius subsp. necessarius (strain STIR1) protein is Ribonuclease HII.